Reading from the N-terminus, the 124-residue chain is Biogenesis of lysosome-related organelles complex 1 subunit CNL1 (124 aa).

A disordered region spans residues 1–20; sequence MMSENITAVEPQENNDVEAD. Residues 75–98 adopt a coiled-coil conformation; sequence IGMAKDLLQKCDDLEKHYDQLDAV.

The protein belongs to the BLOC1S4 family. Component of the biogenesis of lysosome-related organelles complex-1 (BLOC-1).

It is found in the cytoplasm. In terms of biological role, component of the biogenesis of lysosome-related organelles complex-1 (BLOC-1), a complex that is involved in endosomal cargo sorting. The protein is Biogenesis of lysosome-related organelles complex 1 subunit CNL1 (CLN1) of Kluyveromyces lactis (strain ATCC 8585 / CBS 2359 / DSM 70799 / NBRC 1267 / NRRL Y-1140 / WM37) (Yeast).